The following is a 624-amino-acid chain: Phosphatidylserine decarboxylase proenzyme 2 (624 aa).

A disordered region spans residues 1-30 (MGHSPSRHNACGGGGGDGESPPSPLPSRFE). A C2 domain is found at 16-129 (GDGESPPSPL…KDLDEHSEVL (114 aa)). EF-hand domains lie at 156–191 (TEQSFARRVLAIVDYNEDGELSLSEFSDLMKAFGNK) and 192–227 (LAVAKIEELFRQADKNGDGIVDMDELAALLANQQEK). The Ca(2+) site is built by D169, N171, D173, E175, E180, D205, N207, D209, and E216. Active-site charge relay system; for autoendoproteolytic cleavage activity residues include D425, H481, and S569. The Schiff-base intermediate with substrate; via pyruvic acid; for decarboxylase activity role is filled by S569. The residue at position 569 (S569) is a Pyruvic acid (Ser); by autocatalysis.

Belongs to the phosphatidylserine decarboxylase family. PSD-B subfamily. Eukaryotic type II sub-subfamily. In terms of assembly, heterodimer of a large membrane-associated beta subunit and a small pyruvoyl-containing alpha subunit. Requires pyruvate as cofactor. Post-translationally, is synthesized initially as an inactive proenzyme. Formation of the active enzyme involves a self-maturation process in which the active site pyruvoyl group is generated from an internal serine residue via an autocatalytic post-translational modification. Two non-identical subunits are generated from the proenzyme in this reaction, and the pyruvate is formed at the N-terminus of the alpha chain, which is derived from the carboxyl end of the proenzyme. The autoendoproteolytic cleavage occurs by a canonical serine protease mechanism, in which the side chain hydroxyl group of the serine supplies its oxygen atom to form the C-terminus of the beta chain, while the remainder of the serine residue undergoes an oxidative deamination to produce ammonia and the pyruvoyl prosthetic group on the alpha chain. During this reaction, the Ser that is part of the protease active site of the proenzyme becomes the pyruvoyl prosthetic group, which constitutes an essential element of the active site of the mature decarboxylase.

Its subcellular location is the vacuole membrane. The protein resides in the endoplasmic reticulum membrane. The catalysed reaction is a 1,2-diacyl-sn-glycero-3-phospho-L-serine + H(+) = a 1,2-diacyl-sn-glycero-3-phosphoethanolamine + CO2. It functions in the pathway phospholipid metabolism; phosphatidylethanolamine biosynthesis; phosphatidylethanolamine from CDP-diacylglycerol: step 2/2. Functionally, catalyzes the formation of phosphatidylethanolamine (PtdEtn) from phosphatidylserine (PtdSer). Plays a central role in phospholipid metabolism and in the interorganelle trafficking of phosphatidylserine. The polypeptide is Phosphatidylserine decarboxylase proenzyme 2 (Oryza sativa subsp. japonica (Rice)).